Reading from the N-terminus, the 545-residue chain is Glucose-6-phosphate isomerase (545 aa).

Residue Glu351 is the Proton donor of the active site. Residues His382 and Lys510 contribute to the active site.

The protein belongs to the GPI family.

The protein resides in the cytoplasm. It catalyses the reaction alpha-D-glucose 6-phosphate = beta-D-fructose 6-phosphate. The protein operates within carbohydrate biosynthesis; gluconeogenesis. Its pathway is carbohydrate degradation; glycolysis; D-glyceraldehyde 3-phosphate and glycerone phosphate from D-glucose: step 2/4. Functionally, catalyzes the reversible isomerization of glucose-6-phosphate to fructose-6-phosphate. The chain is Glucose-6-phosphate isomerase from Shewanella putrefaciens (strain CN-32 / ATCC BAA-453).